The following is a 331-amino-acid chain: tRNA N6-adenosine threonylcarbamoyltransferase (331 aa).

Residues His108, His112, and Tyr129 each contribute to the a divalent metal cation site. Residues 129–133, Asp161, Gly176, Glu180, and Asn261 contribute to the substrate site; that span reads YASGG. Asp289 is a binding site for a divalent metal cation.

It belongs to the KAE1 / TsaD family. Component of the EKC/KEOPS complex composed of at least BUD32, CGI121, GON7, KAE1 and PCC1; the whole complex dimerizes. Requires a divalent metal cation as cofactor.

The protein localises to the cytoplasm. It is found in the nucleus. The catalysed reaction is L-threonylcarbamoyladenylate + adenosine(37) in tRNA = N(6)-L-threonylcarbamoyladenosine(37) in tRNA + AMP + H(+). Its function is as follows. Component of the EKC/KEOPS complex that is required for the formation of a threonylcarbamoyl group on adenosine at position 37 (t(6)A37) in tRNAs that read codons beginning with adenine. The complex is probably involved in the transfer of the threonylcarbamoyl moiety of threonylcarbamoyl-AMP (TC-AMP) to the N6 group of A37. KAE1 likely plays a direct catalytic role in this reaction, but requires other protein(s) of the complex to fulfill this activity. The EKC/KEOPS complex also promotes both telomere uncapping and telomere elongation. The complex is required for efficient recruitment of transcriptional coactivators. The sequence is that of tRNA N6-adenosine threonylcarbamoyltransferase from Encephalitozoon cuniculi (strain GB-M1) (Microsporidian parasite).